We begin with the raw amino-acid sequence, 1265 residues long: 1-phosphatidylinositol 4,5-bisphosphate phosphodiesterase gamma-2 (1265 aa).

The PH domain occupies 20 to 131 (RALELGTVMT…WLSGLKILHQ (112 aa)). A PI-PLC X-box domain is found at 312-456 (QDMNNPLSHY…LREKIIIKHK (145 aa)). Residues His327 and His372 contribute to the active site. 2 SH2 domains span residues 532-635 (WFHK…TDPV) and 646-735 (WYYD…RYPV). Residues Tyr753 and Tyr759 each carry the phosphotyrosine; by BTK modification. The region spanning 769-829 (MPQRTVKALY…PSNYVEDISA (61 aa)) is the SH3 domain. The 115-residue stretch at 930 to 1044 (LSDLVVYCKP…GYVLQPESMR (115 aa)) folds into the PI-PLC Y-box domain. Residues 1038–1169 (LQPESMRSEK…SGFRSVPLKN (132 aa)) form the C2 domain. Tyr1197 bears the Phosphotyrosine; by BTK mark. Tyr1217 and Tyr1245 each carry phosphotyrosine.

As to quaternary structure, part of a complex composed of EEIG1, TNFRSF11A/RANK, PLCG2, GAB2, TEC and BTK; complex formation increases in the presence of TNFSF11/RANKL. Interacts (via SH2 domain) with CSF1R (tyrosine phosphorylated). Interacts constitutively with THEMIS2. Ca(2+) is required as a cofactor. In terms of processing, phosphorylated on tyrosine residues by CSF1R. Phosphorylated on tyrosine residues by BTK and SYK; upon ligand-induced activation of a variety of growth factor receptors and immune system receptors. Phosphorylation leads to increased phospholipase activity.

The protein resides in the membrane raft. It catalyses the reaction a 1,2-diacyl-sn-glycero-3-phospho-(1D-myo-inositol-4,5-bisphosphate) + H2O = 1D-myo-inositol 1,4,5-trisphosphate + a 1,2-diacyl-sn-glycerol + H(+). Functionally, the production of the second messenger molecules diacylglycerol (DAG) and inositol 1,4,5-trisphosphate (IP3) is mediated by activated phosphatidylinositol-specific phospholipase C enzymes. It is a crucial enzyme in transmembrane signaling. This chain is 1-phosphatidylinositol 4,5-bisphosphate phosphodiesterase gamma-2, found in Rattus norvegicus (Rat).